The chain runs to 328 residues: Bidirectional sugar transporter SWEET16 (328 aa).

Residues 1 to 5 (MADPS) lie on the Extracellular side of the membrane. Residues 6–26 (FFVGIVGNVISILVFASPIAT) form a helical membrane-spanning segment. The MtN3/slv 1 domain maps to 6 to 92 (FFVGIVGNVI…TLYLAYAPRE (87 aa)). At 27 to 38 (FRRIVRSKSTEE) the chain is on the cytoplasmic side. A helical membrane pass occupies residues 39–56 (FRWLPYVTTLLSTSLWTF). At 57–63 (YGLHKPG) the chain is on the extracellular side. Residues 64–84 (GLLIVTVNGSGAALEAIYVTL) traverse the membrane as a helical segment. Topologically, residues 85–99 (YLAYAPRETKAKMVK) are cytoplasmic. A helical membrane pass occupies residues 100–120 (VVLAVNVGALAAVVAVALVAL). Residues 121 to 125 (HGGVR) are Extracellular-facing. The chain crosses the membrane as a helical span at residues 126–146 (LFVVGVLCAALTIGMYAAPMA). One can recognise a MtN3/slv 2 domain in the interval 127-213 (FVVGVLCAAL…LYMAYRRTKK (87 aa)). At 147-161 (AMRTVVKTRSVEYMP) the chain is on the cytoplasmic side. The helical transmembrane segment at 162-182 (FSLSFFLFLNGGVWSVYSLLV) threads the bilayer. Topologically, residues 183–185 (KDY) are extracellular. A helical membrane pass occupies residues 186–206 (FIGIPNAIGFALGTAQLALYM). Topologically, residues 207–328 (AYRRTKKPAG…ATTAGPGDRH (122 aa)) are cytoplasmic. The segment covering 288 to 299 (HQHHGGHHHHHR) has biased composition (basic residues). Residues 288–328 (HQHHGGHHHHHRFDTVPDDDDEAVAAGGTTPATTAGPGDRH) form a disordered region. Over residues 312-328 (AAGGTTPATTAGPGDRH) the composition is skewed to low complexity.

This sequence belongs to the SWEET sugar transporter family. In terms of assembly, forms homooligomers and/or heterooligomers.

Its subcellular location is the cell membrane. Its function is as follows. Mediates both low-affinity uptake and efflux of sugar across the plasma membrane. The polypeptide is Bidirectional sugar transporter SWEET16 (SWEET16) (Oryza sativa subsp. japonica (Rice)).